An 83-amino-acid chain; its full sequence is MSSGGLLLLLGLLTLWAELTPVSSKDRPKYCNLPPEPGPCHGRKFAFYYHPASNKCKEFVYGGCGGNDNNFKTKDKCQRACSG.

Positions 1–24 (MSSGGLLLLLGLLTLWAELTPVSS) are cleaved as a signal peptide. The BPTI/Kunitz inhibitor domain maps to 31 to 81 (CNLPPEPGPCHGRKFAFYYHPASNKCKEFVYGGCGGNDNNFKTKDKCQRAC). Cystine bridges form between cysteine 31/cysteine 81, cysteine 40/cysteine 64, and cysteine 56/cysteine 77.

This sequence belongs to the venom Kunitz-type family. In terms of tissue distribution, expressed by the venom gland.

Its subcellular location is the secreted. Its function is as follows. Snake venom serine protease inhibitor. This chain is Kunitz-type serine protease inhibitor isoform 5, found in Bungarus flaviceps flaviceps (Red-headed krait).